The primary structure comprises 255 residues: Type III pantothenate kinase (255 aa).

Residue 6–13 (DIGNSNIV) participates in ATP binding. Residues Tyr100 and 107–110 (GSDR) each bind substrate. Asp109 serves as the catalytic Proton acceptor. Asp129 contacts K(+). Thr132 serves as a coordination point for ATP. Residue Thr184 participates in substrate binding.

Belongs to the type III pantothenate kinase family. As to quaternary structure, homodimer. NH4(+) is required as a cofactor. Requires K(+) as cofactor.

The protein localises to the cytoplasm. It carries out the reaction (R)-pantothenate + ATP = (R)-4'-phosphopantothenate + ADP + H(+). It functions in the pathway cofactor biosynthesis; coenzyme A biosynthesis; CoA from (R)-pantothenate: step 1/5. Functionally, catalyzes the phosphorylation of pantothenate (Pan), the first step in CoA biosynthesis. The sequence is that of Type III pantothenate kinase from Brevibacillus brevis (strain 47 / JCM 6285 / NBRC 100599).